Reading from the N-terminus, the 479-residue chain is Ribosomal RNA small subunit methyltransferase F (479 aa).

Residues A125–K131, E149, D176, and D194 each bind S-adenosyl-L-methionine. C247 serves as the catalytic Nucleophile.

It belongs to the class I-like SAM-binding methyltransferase superfamily. RsmB/NOP family.

The protein localises to the cytoplasm. It catalyses the reaction cytidine(1407) in 16S rRNA + S-adenosyl-L-methionine = 5-methylcytidine(1407) in 16S rRNA + S-adenosyl-L-homocysteine + H(+). Its function is as follows. Specifically methylates the cytosine at position 1407 (m5C1407) of 16S rRNA. This chain is Ribosomal RNA small subunit methyltransferase F, found in Salmonella paratyphi C (strain RKS4594).